Reading from the N-terminus, the 105-residue chain is Insulin (105 aa).

A signal peptide spans 1 to 24 (MALWTRLRPLLALLALWPPPPARA). Disulfide bonds link cysteine 31-cysteine 91, cysteine 43-cysteine 104, and cysteine 90-cysteine 95. The propeptide at 57-82 (EVEGPQVGALELAGGPGAGGLEGPPQ) is c peptide.

The protein belongs to the insulin family. As to quaternary structure, heterodimer of a B chain and an A chain linked by two disulfide bonds.

Its subcellular location is the secreted. Its function is as follows. Insulin decreases blood glucose concentration. It increases cell permeability to monosaccharides, amino acids and fatty acids. It accelerates glycolysis, the pentose phosphate cycle, and glycogen synthesis in liver. The protein is Insulin (INS) of Bos taurus (Bovine).